Consider the following 115-residue polypeptide: Beta-2-microglobulin (115 aa).

An N-terminal signal peptide occupies residues 1–18 (MGLLICSLLLGLLCCSMA). Positions 23-114 (PKVEVYTREP…KSKDHFLMIG (92 aa)) constitute an Ig-like C1-type domain.

It belongs to the beta-2-microglobulin family. As to quaternary structure, heterodimer of an alpha chain and a beta chain. Beta-2-microglobulin is the beta-chain of major histocompatibility complex class I molecules.

Its subcellular location is the secreted. In terms of biological role, component of the class I major histocompatibility complex (MHC). Involved in the presentation of peptide antigens to the immune system. The polypeptide is Beta-2-microglobulin (b2m) (Paralichthys olivaceus (Bastard halibut)).